Consider the following 445-residue polypeptide: Trigger factor (445 aa).

Residues 168–253 form the PPIase FKBP-type domain; sequence GDAVIVDFVG…IHEVRAPQTP (86 aa).

This sequence belongs to the FKBP-type PPIase family. Tig subfamily.

It is found in the cytoplasm. The enzyme catalyses [protein]-peptidylproline (omega=180) = [protein]-peptidylproline (omega=0). Functionally, involved in protein export. Acts as a chaperone by maintaining the newly synthesized protein in an open conformation. Functions as a peptidyl-prolyl cis-trans isomerase. This is Trigger factor from Hyphomonas neptunium (strain ATCC 15444).